The sequence spans 122 residues: Protein translocase subunit SecE (122 aa).

3 helical membrane passes run Leu-14–Phe-34, Pro-38–Leu-58, and Leu-93–Leu-113.

This sequence belongs to the SecE/SEC61-gamma family. Component of the Sec protein translocase complex. Heterotrimer consisting of SecY, SecE and SecG subunits. The heterotrimers can form oligomers, although 1 heterotrimer is thought to be able to translocate proteins. Interacts with the ribosome. Interacts with SecDF, and other proteins may be involved. Interacts with SecA.

It localises to the cell inner membrane. Essential subunit of the Sec protein translocation channel SecYEG. Clamps together the 2 halves of SecY. May contact the channel plug during translocation. The polypeptide is Protein translocase subunit SecE (Pseudomonas aeruginosa (strain ATCC 15692 / DSM 22644 / CIP 104116 / JCM 14847 / LMG 12228 / 1C / PRS 101 / PAO1)).